The primary structure comprises 348 residues: Signal recognition particle receptor FtsY (348 aa).

Residues 143-150 (GVNGVGKT), 225-229 (DTSGR), and 289-292 (TKMD) each bind GTP.

This sequence belongs to the GTP-binding SRP family. FtsY subfamily. As to quaternary structure, part of the signal recognition particle protein translocation system, which is composed of SRP and FtsY.

It localises to the cell membrane. The protein resides in the cytoplasm. It catalyses the reaction GTP + H2O = GDP + phosphate + H(+). Its function is as follows. Involved in targeting and insertion of nascent membrane proteins into the cytoplasmic membrane. Acts as a receptor for the complex formed by the signal recognition particle (SRP) and the ribosome-nascent chain (RNC). The protein is Signal recognition particle receptor FtsY of Mycoplasma pneumoniae (strain ATCC 29342 / M129 / Subtype 1) (Mycoplasmoides pneumoniae).